The primary structure comprises 353 residues: MTAILERRESESLWGRFCNWITSTENRLYIGWFGVLMIPTLLTATSVFIIAFIAAPPVDIDGIREPVSGSLLYGNNIISGAIIPTSAAIGLHFYPIWEAASVDEWLYNGGPYELIVLHFLLGVACYMGREWELSFRLGMRPWIAVAYSAPVAAATAVFLIYPIGQGSFSDGMPLGISGTFNFMIVFQAEHNILMHPFHMLGVAGVFGGSLFSAMHGSLVTSSLIRETTENESANEGYRFGQEEETYNIVAAHGYFGRLIFQYASFNNSSSLHFFLTAWPVVGIWFTALGISTMAFNLNGFNFNQSVVDSQGRVINTWADIINRANLGMEVMHERNAHNFPLDLAVVEAPSTNG.

Thr-2 is modified (N-acetylthreonine). Residue Thr-2 is modified to Phosphothreonine. 3 consecutive transmembrane segments (helical) span residues 29-46 (YIGW…TATS), 118-133 (HFLL…EWEL), and 142-156 (WIAV…AATA). Residue His-118 participates in chlorophyll a binding. Residue Tyr-126 participates in pheophytin a binding. Residues Asp-170 and Glu-189 each contribute to the [CaMn4O5] cluster site. Residues 197–218 (FHMLGVAGVFGGSLFSAMHGSL) form a helical membrane-spanning segment. Residue His-198 participates in chlorophyll a binding. A quinone-binding positions include His-215 and 264 to 265 (SF). His-215 is a Fe cation binding site. His-272 is a Fe cation binding site. The helical transmembrane segment at 274–288 (FLTAWPVVGIWFTAL) threads the bilayer. The [CaMn4O5] cluster site is built by His-332, Glu-333, Asp-342, and Ala-344. The propeptide occupies 345–353 (VVEAPSTNG).

It belongs to the reaction center PufL/M/PsbA/D family. PSII is composed of 1 copy each of membrane proteins PsbA, PsbB, PsbC, PsbD, PsbE, PsbF, PsbH, PsbI, PsbJ, PsbK, PsbL, PsbM, PsbT, PsbX, PsbY, PsbZ, Psb30/Ycf12, at least 3 peripheral proteins of the oxygen-evolving complex and a large number of cofactors. It forms dimeric complexes. The D1/D2 heterodimer binds P680, chlorophylls that are the primary electron donor of PSII, and subsequent electron acceptors. It shares a non-heme iron and each subunit binds pheophytin, quinone, additional chlorophylls, carotenoids and lipids. D1 provides most of the ligands for the Mn4-Ca-O5 cluster of the oxygen-evolving complex (OEC). There is also a Cl(-1) ion associated with D1 and D2, which is required for oxygen evolution. The PSII complex binds additional chlorophylls, carotenoids and specific lipids. is required as a cofactor. Post-translationally, tyr-161 forms a radical intermediate that is referred to as redox-active TyrZ, YZ or Y-Z. C-terminally processed by CTPA; processing is essential to allow assembly of the oxygen-evolving complex and thus photosynthetic growth.

It is found in the plastid. The protein resides in the chloroplast thylakoid membrane. It catalyses the reaction 2 a plastoquinone + 4 hnu + 2 H2O = 2 a plastoquinol + O2. Photosystem II (PSII) is a light-driven water:plastoquinone oxidoreductase that uses light energy to abstract electrons from H(2)O, generating O(2) and a proton gradient subsequently used for ATP formation. It consists of a core antenna complex that captures photons, and an electron transfer chain that converts photonic excitation into a charge separation. The D1/D2 (PsbA/PsbD) reaction center heterodimer binds P680, the primary electron donor of PSII as well as several subsequent electron acceptors. This Aethionema cordifolium (Lebanon stonecress) protein is Photosystem II protein D1.